The primary structure comprises 536 residues: Phosphoenolpyruvate carboxykinase (ATP) (536 aa).

The substrate site is built by arginine 61, tyrosine 195, and lysine 201. ATP contacts are provided by residues lysine 201, histidine 220, and glycine 236–threonine 244. Residues lysine 201 and histidine 220 each contribute to the Mn(2+) site. Mn(2+) is bound at residue aspartate 257. ATP is bound by residues glutamate 285, arginine 322, and threonine 447. Position 322 (arginine 322) interacts with substrate.

The protein belongs to the phosphoenolpyruvate carboxykinase (ATP) family. Mn(2+) is required as a cofactor.

The protein resides in the cytoplasm. The catalysed reaction is oxaloacetate + ATP = phosphoenolpyruvate + ADP + CO2. The protein operates within carbohydrate biosynthesis; gluconeogenesis. Involved in the gluconeogenesis. Catalyzes the conversion of oxaloacetate (OAA) to phosphoenolpyruvate (PEP) through direct phosphoryl transfer between the nucleoside triphosphate and OAA. The sequence is that of Phosphoenolpyruvate carboxykinase (ATP) from Brucella melitensis biotype 1 (strain ATCC 23456 / CCUG 17765 / NCTC 10094 / 16M).